Reading from the N-terminus, the 124-residue chain is Protein ApaG (124 aa).

Residues 1-124 (MSRYELTVQV…FALAMPRMLH (124 aa)) enclose the ApaG domain.

This is Protein ApaG from Ralstonia nicotianae (strain ATCC BAA-1114 / GMI1000) (Ralstonia solanacearum).